A 201-amino-acid polypeptide reads, in one-letter code: Probable molybdenum cofactor guanylyltransferase (201 aa).

Residues 6-8 (LAG), K18, D65, and D97 contribute to the GTP site. D97 lines the Mg(2+) pocket.

This sequence belongs to the MobA family. Mg(2+) serves as cofactor.

The protein resides in the cytoplasm. It carries out the reaction Mo-molybdopterin + GTP + H(+) = Mo-molybdopterin guanine dinucleotide + diphosphate. Transfers a GMP moiety from GTP to Mo-molybdopterin (Mo-MPT) cofactor (Moco or molybdenum cofactor) to form Mo-molybdopterin guanine dinucleotide (Mo-MGD) cofactor. This chain is Probable molybdenum cofactor guanylyltransferase, found in Staphylococcus epidermidis (strain ATCC 35984 / DSM 28319 / BCRC 17069 / CCUG 31568 / BM 3577 / RP62A).